A 381-amino-acid polypeptide reads, in one-letter code: Queuine tRNA-ribosyltransferase (381 aa).

The active-site Proton acceptor is the Asp-90. Substrate contacts are provided by residues 90 to 94, Asp-144, Gln-193, and Gly-221; that span reads DSGGF. The tract at residues 252–258 is RNA binding; the sequence is GVGTPEN. Asp-271 functions as the Nucleophile in the catalytic mechanism. Residues 276–280 are RNA binding; important for wobble base 34 recognition; that stretch reads TRNAR. 4 residues coordinate Zn(2+): Cys-309, Cys-311, Cys-314, and His-340.

The protein belongs to the queuine tRNA-ribosyltransferase family. In terms of assembly, homodimer. Within each dimer, one monomer is responsible for RNA recognition and catalysis, while the other monomer binds to the replacement base PreQ1. It depends on Zn(2+) as a cofactor.

It carries out the reaction 7-aminomethyl-7-carbaguanine + guanosine(34) in tRNA = 7-aminomethyl-7-carbaguanosine(34) in tRNA + guanine. It participates in tRNA modification; tRNA-queuosine biosynthesis. In terms of biological role, catalyzes the base-exchange of a guanine (G) residue with the queuine precursor 7-aminomethyl-7-deazaguanine (PreQ1) at position 34 (anticodon wobble position) in tRNAs with GU(N) anticodons (tRNA-Asp, -Asn, -His and -Tyr). Catalysis occurs through a double-displacement mechanism. The nucleophile active site attacks the C1' of nucleotide 34 to detach the guanine base from the RNA, forming a covalent enzyme-RNA intermediate. The proton acceptor active site deprotonates the incoming PreQ1, allowing a nucleophilic attack on the C1' of the ribose to form the product. After dissociation, two additional enzymatic reactions on the tRNA convert PreQ1 to queuine (Q), resulting in the hypermodified nucleoside queuosine (7-(((4,5-cis-dihydroxy-2-cyclopenten-1-yl)amino)methyl)-7-deazaguanosine). This is Queuine tRNA-ribosyltransferase from Helicobacter hepaticus (strain ATCC 51449 / 3B1).